The chain runs to 107 residues: Protein KleE (107 aa).

The protein is Protein KleE (kleE) of Escherichia coli.